Here is a 329-residue protein sequence, read N- to C-terminus: Beta-ketoacyl-[acyl-carrier-protein] synthase III (329 aa).

Residues Cys113 and His255 contribute to the active site. Residues 256–260 (QANQR) are ACP-binding. Asn285 is an active-site residue.

The protein belongs to the thiolase-like superfamily. FabH family. In terms of assembly, homodimer.

The protein resides in the cytoplasm. It catalyses the reaction malonyl-[ACP] + acetyl-CoA + H(+) = 3-oxobutanoyl-[ACP] + CO2 + CoA. Its pathway is lipid metabolism; fatty acid biosynthesis. Its function is as follows. Catalyzes the condensation reaction of fatty acid synthesis by the addition to an acyl acceptor of two carbons from malonyl-ACP. Catalyzes the first condensation reaction which initiates fatty acid synthesis and may therefore play a role in governing the total rate of fatty acid production. Possesses both acetoacetyl-ACP synthase and acetyl transacylase activities. Its substrate specificity determines the biosynthesis of branched-chain and/or straight-chain of fatty acids. The chain is Beta-ketoacyl-[acyl-carrier-protein] synthase III from Chlorobium phaeobacteroides (strain DSM 266 / SMG 266 / 2430).